We begin with the raw amino-acid sequence, 354 residues long: Histidinol-phosphate aminotransferase (354 aa).

The residue at position 208 (Lys208) is an N6-(pyridoxal phosphate)lysine.

The protein belongs to the class-II pyridoxal-phosphate-dependent aminotransferase family. Histidinol-phosphate aminotransferase subfamily. Homodimer. Pyridoxal 5'-phosphate is required as a cofactor.

It catalyses the reaction L-histidinol phosphate + 2-oxoglutarate = 3-(imidazol-4-yl)-2-oxopropyl phosphate + L-glutamate. Its pathway is amino-acid biosynthesis; L-histidine biosynthesis; L-histidine from 5-phospho-alpha-D-ribose 1-diphosphate: step 7/9. This chain is Histidinol-phosphate aminotransferase, found in Aquifex aeolicus (strain VF5).